The sequence spans 523 residues: Tyrosine-protein kinase transforming protein Src (523 aa).

Residues 1–50 are disordered; sequence MGSSKSKPKDPSQRRRSLEPPDSTHHGGFPASQTPNKTAAPDTHRTPSRS. G2 carries the N-myristoyl glycine; by host lipid modification. The span at 7–25 shows a compositional bias: basic and acidic residues; it reads KPKDPSQRRRSLEPPDSTH. An SH3 domain is found at 71–139; the sequence is TSPQRAGALA…PSNYVAPSDS (69 aa). The SH2 domain maps to 145–242; the sequence is WYFGKITRRE…GLCHRLTNVC (98 aa). Residues 264–514 enclose the Protein kinase domain; it reads LRLEVKLGQG…TFEYLQAQLL (251 aa). ATP is bound by residues 270–278 and K292; that span reads LGQGYFGEV. D383 functions as the Proton acceptor in the catalytic mechanism. Y413 carries the post-translational modification Phosphotyrosine; by autocatalysis.

It belongs to the protein kinase superfamily. Tyr protein kinase family. SRC subfamily. Homodimer. In terms of processing, the phosphorylated form is termed pp60v-src.

It catalyses the reaction L-tyrosyl-[protein] + ATP = O-phospho-L-tyrosyl-[protein] + ADP + H(+). In terms of biological role, this phosphoprotein, required for both the initiation and the maintenance of neoplastic transformation, is a protein kinase that catalyzes the phosphorylation of tyrosine residues in vitro. This is Tyrosine-protein kinase transforming protein Src (V-SRC) from Gallus gallus (Chicken).